The primary structure comprises 429 residues: Histidinol dehydrogenase (429 aa).

NAD(+)-binding residues include Y130, Q191, and N214. 3 residues coordinate substrate: S237, Q259, and H262. Residues Q259 and H262 each coordinate Zn(2+). Catalysis depends on proton acceptor residues E327 and H328. 4 residues coordinate substrate: H328, D361, E415, and H420. D361 lines the Zn(2+) pocket. Residue H420 participates in Zn(2+) binding.

This sequence belongs to the histidinol dehydrogenase family. The cofactor is Zn(2+).

It carries out the reaction L-histidinol + 2 NAD(+) + H2O = L-histidine + 2 NADH + 3 H(+). It participates in amino-acid biosynthesis; L-histidine biosynthesis; L-histidine from 5-phospho-alpha-D-ribose 1-diphosphate: step 9/9. Catalyzes the sequential NAD-dependent oxidations of L-histidinol to L-histidinaldehyde and then to L-histidine. The polypeptide is Histidinol dehydrogenase (Nitrobacter winogradskyi (strain ATCC 25391 / DSM 10237 / CIP 104748 / NCIMB 11846 / Nb-255)).